A 506-amino-acid chain; its full sequence is tRNA (guanine(6)-N(2))-methyltransferase THUMP3 (506 aa).

Residues 144–172 (KTKRRKLNPNSSKQKIDNGRGDTTVEKDV) form a disordered region. Residues 157-172 (QKIDNGRGDTTVEKDV) are compositionally biased toward basic and acidic residues. The THUMP domain maps to 170-286 (KDVKKELTNS…DNEVVVGIAL (117 aa)).

The protein belongs to the methyltransferase superfamily. As to quaternary structure, part of the heterodimeric THUMPD3-TRM112 methyltransferase complex; this complex forms an active tRNA methyltransferase, where TRMT112 acts as an activator of the catalytic subunit THUMPD3.

Its subcellular location is the cytoplasm. The enzyme catalyses guanosine(6) in tRNA + S-adenosyl-L-methionine = N(2)-methylguanosine(6) in tRNA + S-adenosyl-L-homocysteine + H(+). It carries out the reaction guanosine(7) in tRNA + S-adenosyl-L-methionine = N(2)-methylguanosine(7) in tRNA + S-adenosyl-L-homocysteine + H(+). Functionally, catalytic subunit of the THUMPD3-TRM112 methyltransferase complex, that specifically mediates the S-adenosyl-L-methionine-dependent N(2)-methylation of guanosine nucleotide at position 6 (m2G6) in tRNAs. This is one of the major tRNA (guanine-N(2))-methyltransferases. Also catalyzes the S-adenosyl-L-methionine-dependent N(2)-methylation of guanosine nucleotide at position 7 of tRNA(Trp). The protein is tRNA (guanine(6)-N(2))-methyltransferase THUMP3 of Bos taurus (Bovine).